We begin with the raw amino-acid sequence, 954 residues long: Leucine--tRNA ligase (954 aa).

The 'HIGH' region signature appears at proline 40–histidine 51. The 'KMSKS' region motif lies at lysine 729–serine 733. An ATP-binding site is contributed by lysine 732.

This sequence belongs to the class-I aminoacyl-tRNA synthetase family.

The protein resides in the cytoplasm. It catalyses the reaction tRNA(Leu) + L-leucine + ATP = L-leucyl-tRNA(Leu) + AMP + diphosphate. The sequence is that of Leucine--tRNA ligase from Flavobacterium johnsoniae (strain ATCC 17061 / DSM 2064 / JCM 8514 / BCRC 14874 / CCUG 350202 / NBRC 14942 / NCIMB 11054 / UW101) (Cytophaga johnsonae).